Consider the following 214-residue polypeptide: MQRILDLRRIYALTVDPRALHGSVWKVDFKVVRQELIRYIKDLALFEGEFILSSGQKSSYYIDLRRVSLDCRAAPIIGKVMFDLICDLQDVDAIGGLTMGADPIACAIMHYAASVGRSYNAFVVRKQKKTHGLARLIEGPDIRGKRVVIVEDTSTTGNSPITAARRAEETGATVAAIAVMVDRETGARQAIEKAGYSYYAALRVTDILDRGTAD.

5-phospho-alpha-D-ribose 1-diphosphate is bound by residues Arg-125, Lys-126, Lys-129, His-131, and 151 to 159 (EDTSTTGNS). The orotate site is built by Thr-155 and Arg-183.

This sequence belongs to the purine/pyrimidine phosphoribosyltransferase family. PyrE subfamily. In terms of assembly, homodimer. Mg(2+) is required as a cofactor.

It carries out the reaction orotidine 5'-phosphate + diphosphate = orotate + 5-phospho-alpha-D-ribose 1-diphosphate. It participates in pyrimidine metabolism; UMP biosynthesis via de novo pathway; UMP from orotate: step 1/2. Catalyzes the transfer of a ribosyl phosphate group from 5-phosphoribose 1-diphosphate to orotate, leading to the formation of orotidine monophosphate (OMP). This Tropheryma whipplei (strain TW08/27) (Whipple's bacillus) protein is Orotate phosphoribosyltransferase.